The sequence spans 396 residues: Acetate kinase (396 aa).

Residue Asn-8 participates in Mg(2+) binding. Residue Lys-15 participates in ATP binding. Residue Arg-89 participates in substrate binding. Catalysis depends on Asp-146, which acts as the Proton donor/acceptor. Residues 206–210, 283–285, and 331–335 contribute to the ATP site; these read HIGNG, DMR, and GVGEN. Residue Glu-383 participates in Mg(2+) binding.

The protein belongs to the acetokinase family. As to quaternary structure, homodimer. Requires Mg(2+) as cofactor. It depends on Mn(2+) as a cofactor.

Its subcellular location is the cytoplasm. It carries out the reaction acetate + ATP = acetyl phosphate + ADP. Its pathway is metabolic intermediate biosynthesis; acetyl-CoA biosynthesis; acetyl-CoA from acetate: step 1/2. In terms of biological role, catalyzes the formation of acetyl phosphate from acetate and ATP. Can also catalyze the reverse reaction. The protein is Acetate kinase of Streptococcus pneumoniae (strain 70585).